We begin with the raw amino-acid sequence, 160 residues long: Vesicle transport protein SFT2B (160 aa).

Met-1 is modified (N-acetylmethionine). The Cytoplasmic portion of the chain corresponds to 1–36 (MDKLKKVLSGQDTEDRSGLSEVVEASSLSWSTRIKG). Residue Ser-9 is modified to Phosphoserine. A helical membrane pass occupies residues 37–57 (FIACFAIGILCSLLGTVLLWV). Topologically, residues 58-63 (PRKGLH) are lumenal. Residues 64–84 (LFAVFYTFGNIASIGSTIFLM) traverse the membrane as a helical segment. The Cytoplasmic segment spans residues 85–98 (GPVKQLKRMFEPTR). A helical transmembrane segment spans residues 99–119 (LIATIMVLLCFALTLCSAFWW). At 120–123 (HNKG) the chain is on the lumenal side. Residues 124 to 144 (LALIFCILQSLALTWYSLSFI) traverse the membrane as a helical segment. The Cytoplasmic portion of the chain corresponds to 145-160 (PFARDAVKKCFAVCLA).

Belongs to the SFT2 family.

Its subcellular location is the membrane. Its function is as follows. May be involved in fusion of retrograde transport vesicles derived from an endocytic compartment with the Golgi complex. The chain is Vesicle transport protein SFT2B from Homo sapiens (Human).